We begin with the raw amino-acid sequence, 571 residues long: Ferroportin (571 aa).

The Cytoplasmic portion of the chain corresponds to 1 to 23; the sequence is MTRAGDHNRQRGCCGSLADYLTS. A helical membrane pass occupies residues 24–53; that stretch reads AKFLLYLGHSLSTWGDRMWHFAVSVFLVEL. Residues Asp39 and His43 each contribute to the Fe cation site. Residues 54-57 are Extracellular-facing; that stretch reads YGNS. The chain crosses the membrane as a helical span at residues 58–84; the sequence is LLLTAVYGLVVAGSVLVLGAIIGDWVD. Residues 85–87 are Cytoplasmic-facing; that stretch reads KNA. A helical membrane pass occupies residues 88–118; that stretch reads RLKVAQTSLVVQNVSVILCGIILMMVFLHKH. Over 119-126 the chain is Extracellular; that stretch reads ELLTMYHG. Residues 127-162 form a helical membrane-spanning segment; sequence WVLTSCYILIITIANIANLASTATAITIQRDWIVVV. The Cytoplasmic segment spans residues 163 to 164; it reads AG. The chain crosses the membrane as a helical span at residues 165 to 195; sequence EDRSKLANMNATIRRIDQLTNILAPMAVGQI. The Extracellular segment spans residues 196–202; the sequence is MTFGSPV. The helical transmembrane segment at 203–229 threads the bilayer; the sequence is IGCGFISGWNLVSMCVEYVLLWKVYQK. Residues 230–306 are Cytoplasmic-facing; that stretch reads TPALAVKAGL…DGWVSYYNQP (77 aa). Residues 307–333 form a helical membrane-spanning segment; sequence VFLAGMGLAFLYMTVLGFDCITTGYAY. Cys326 is a Fe cation binding site. Residues 334-338 are Extracellular-facing; that stretch reads TQGLS. Residues 339-366 traverse the membrane as a helical segment; the sequence is GSILSILMGASAITGIMGTVAFTWLRRK. Over 367-368 the chain is Cytoplasmic; it reads CG. A helical membrane pass occupies residues 369–391; that stretch reads LVRTGLISGLAQLSCLILCVISV. Over 392-453 the chain is Extracellular; sequence FMPGSPLDLS…ETSPESVPII (62 aa). Asn434 carries an N-linked (GlcNAc...) asparagine glycan. Residues 454 to 483 form a helical membrane-spanning segment; sequence SVSLLFAGVIAARIGLWSFDLTVTQLLQEN. At 484–488 the chain is on the cytoplasmic side; sequence VIESE. A helical membrane pass occupies residues 489-513; the sequence is RGIINGVQNSMNYLLDLLHFIMVIL. His507 lines the Fe cation pocket. The Extracellular portion of the chain corresponds to 514 to 516; the sequence is APN. The chain crosses the membrane as a helical span at residues 517–542; it reads PEAFGLLVLISVSFVAMGHIMYFRFA. Topologically, residues 543 to 571 are cytoplasmic; sequence QNTLGNKLFACGPDAKEVRKENQANTSVV.

This sequence belongs to the ferroportin (FP) (TC 2.A.100) family. SLC40A subfamily. Identified in a complex with STOM. Interacts with HAMP; affinity of the peptide hormone HAMP for SLC40A1 increases by 80-fold in the presence of iron and the interaction promotes SLC40A1 ubiquitination and degradation. Part of a complex composed of SLC40A1/ferroportin, TF/transferrin and HEPH/hephaestin that transfers iron from cells to transferrin. In terms of processing, polyubiquitinated by RNF217; leading to proteasomal degradation. Under conditions of high systemic iron levels, both the hormone peptide hepcidin/HAMP and holo(iron bound)-transferrin/TF induce the ubiquitination, internalization and proteasomal degradation of SLC40A1 to control iron release from cells. As to expression, detected in erythrocytes (at protein level). Expressed in placenta, intestine, muscle and spleen. Highly expressed in mature red blood.

The protein localises to the cell membrane. Its subcellular location is the basolateral cell membrane. The catalysed reaction is Fe(2+)(in) = Fe(2+)(out). In terms of biological role, transports Fe(2+) from the inside of a cell to the outside of the cell, playing a key role for maintaining systemic iron homeostasis. Transports iron from intestinal, splenic, hepatic cells, macrophages and erythrocytes into the blood to provide iron to other tissues. Controls therefore dietary iron uptake, iron recycling by macrophages and erythrocytes, and release of iron stores in hepatocytes. When iron is in excess in serum, circulating HAMP/hepcidin levels increase resulting in a degradation of SLC40A1, thus limiting the iron efflux to plasma. The chain is Ferroportin from Homo sapiens (Human).